Reading from the N-terminus, the 262-residue chain is Flap endonuclease Xni (262 aa).

Aspartate 105 contributes to the Mg(2+) binding site. Positions 162–259 constitute a 5'-3' exonuclease domain; the sequence is ERSQFLDLMA…VIDSQPEKTI (98 aa). K(+) is bound by residues leucine 172, alanine 173, proline 181, isoleucine 183, and isoleucine 186. An interaction with DNA region spans residues 185–190; sequence GIGPKS.

This sequence belongs to the Xni family. Mg(2+) is required as a cofactor. It depends on K(+) as a cofactor.

Has flap endonuclease activity. During DNA replication, flap endonucleases cleave the 5'-overhanging flap structure that is generated by displacement synthesis when DNA polymerase encounters the 5'-end of a downstream Okazaki fragment. The polypeptide is Flap endonuclease Xni (Shewanella baltica (strain OS185)).